A 466-amino-acid chain; its full sequence is Cell division protein FtsP (466 aa).

The tat-type signal signal peptide spans 1 to 28; the sequence is MNYSRRSLFKKTLIATALSALPATLLAA.

It belongs to the FtsP family. In terms of processing, predicted to be exported by the Tat system. The position of the signal peptide cleavage has not been experimentally proven.

The protein localises to the periplasm. Cell division protein that is required for growth during stress conditions. May be involved in protecting or stabilizing the divisomal assembly under conditions of stress. In Actinobacillus succinogenes (strain ATCC 55618 / DSM 22257 / CCUG 43843 / 130Z), this protein is Cell division protein FtsP.